An 810-amino-acid chain; its full sequence is Glycerol-3-phosphate acyltransferase (810 aa).

The short motif at Cys-305–Ile-310 is the HXXXXD motif element.

This sequence belongs to the GPAT/DAPAT family.

The protein resides in the cell inner membrane. The catalysed reaction is sn-glycerol 3-phosphate + an acyl-CoA = a 1-acyl-sn-glycero-3-phosphate + CoA. Its pathway is phospholipid metabolism; CDP-diacylglycerol biosynthesis; CDP-diacylglycerol from sn-glycerol 3-phosphate: step 1/3. This Haemophilus influenzae (strain PittEE) protein is Glycerol-3-phosphate acyltransferase.